The chain runs to 322 residues: Acetyl-coenzyme A carboxylase carboxyl transferase subunit alpha (322 aa).

One can recognise a CoA carboxyltransferase C-terminal domain in the interval 40–297 (PLQKKLGDLR…RETLTRNLEE (258 aa)).

The protein belongs to the AccA family. Acetyl-CoA carboxylase is a heterohexamer composed of biotin carboxyl carrier protein (AccB), biotin carboxylase (AccC) and two subunits each of ACCase subunit alpha (AccA) and ACCase subunit beta (AccD).

The protein resides in the cytoplasm. It carries out the reaction N(6)-carboxybiotinyl-L-lysyl-[protein] + acetyl-CoA = N(6)-biotinyl-L-lysyl-[protein] + malonyl-CoA. It participates in lipid metabolism; malonyl-CoA biosynthesis; malonyl-CoA from acetyl-CoA: step 1/1. In terms of biological role, component of the acetyl coenzyme A carboxylase (ACC) complex. First, biotin carboxylase catalyzes the carboxylation of biotin on its carrier protein (BCCP) and then the CO(2) group is transferred by the carboxyltransferase to acetyl-CoA to form malonyl-CoA. In Gemmatimonas aurantiaca (strain DSM 14586 / JCM 11422 / NBRC 100505 / T-27), this protein is Acetyl-coenzyme A carboxylase carboxyl transferase subunit alpha.